The chain runs to 124 residues: Predicted GPI-anchored protein 11 (124 aa).

Positions 1–18 are cleaved as a signal peptide; that stretch reads MKFQFVTALALASTMAVA. Positions 38-59 are disordered; the sequence is REGGSTGAELQDNNQPTAGLFG. The GPI-anchor amidated serine moiety is linked to residue serine 107. The propeptide at 108–124 is removed in mature form; the sequence is GAAGGVGNLFSGILGGL.

The protein resides in the cell membrane. The protein is Predicted GPI-anchored protein 11 (PGA11) of Candida albicans (strain SC5314 / ATCC MYA-2876) (Yeast).